The primary structure comprises 455 residues: ATP-dependent protease ATPase subunit HslU (455 aa).

ATP contacts are provided by residues Ile19, 61 to 66 (GVGKTE), Asp268, Glu333, and Arg405.

This sequence belongs to the ClpX chaperone family. HslU subfamily. A double ring-shaped homohexamer of HslV is capped on each side by a ring-shaped HslU homohexamer. The assembly of the HslU/HslV complex is dependent on binding of ATP.

Its subcellular location is the cytoplasm. Its function is as follows. ATPase subunit of a proteasome-like degradation complex; this subunit has chaperone activity. The binding of ATP and its subsequent hydrolysis by HslU are essential for unfolding of protein substrates subsequently hydrolyzed by HslV. HslU recognizes the N-terminal part of its protein substrates and unfolds these before they are guided to HslV for hydrolysis. The polypeptide is ATP-dependent protease ATPase subunit HslU (Francisella philomiragia subsp. philomiragia (strain ATCC 25017 / CCUG 19701 / FSC 153 / O#319-036)).